The chain runs to 386 residues: Alanine racemase (386 aa).

Lys-48 functions as the Proton acceptor; specific for D-alanine in the catalytic mechanism. Lys-48 bears the N6-(pyridoxal phosphate)lysine mark. Arg-147 lines the substrate pocket. Tyr-279 acts as the Proton acceptor; specific for L-alanine in catalysis. Met-327 serves as a coordination point for substrate.

It belongs to the alanine racemase family. The cofactor is pyridoxal 5'-phosphate.

It carries out the reaction L-alanine = D-alanine. It participates in amino-acid biosynthesis; D-alanine biosynthesis; D-alanine from L-alanine: step 1/1. In terms of biological role, catalyzes the interconversion of L-alanine and D-alanine. May also act on other amino acids. The polypeptide is Alanine racemase (alr) (Prochlorococcus marinus (strain SARG / CCMP1375 / SS120)).